A 393-amino-acid chain; its full sequence is L-methionine gamma-lyase (393 aa).

Residues 63–65 (YQR) and 93–94 (GM) contribute to the pyridoxal 5'-phosphate site. Y119 provides a ligand contact to L-homocysteine. 206-208 (SAT) provides a ligand contact to pyridoxal 5'-phosphate. At K209 the chain carries N6-(pyridoxal phosphate)lysine. Residue R367 participates in L-homocysteine binding. R367 serves as a coordination point for L-methionine.

It belongs to the trans-sulfuration enzymes family. L-methionine gamma-lyase subfamily. As to quaternary structure, homotetramer. Pyridoxal 5'-phosphate serves as cofactor.

It catalyses the reaction L-methionine + H2O = methanethiol + 2-oxobutanoate + NH4(+). It carries out the reaction L-homocysteine + H2O = 2-oxobutanoate + hydrogen sulfide + NH4(+) + H(+). Functionally, catalyzes the alpha,gamma-elimination of L-methionine to produce methanethiol, 2-oxobutanoate and ammonia. Is also able to catalyze the alpha,gamma-elimination of L-homocysteine. This chain is L-methionine gamma-lyase, found in Brevibacterium sandarakinum.